Reading from the N-terminus, the 482-residue chain is 2-succinylbenzoate--CoA ligase (482 aa).

It belongs to the ATP-dependent AMP-binding enzyme family. MenE subfamily.

The catalysed reaction is 2-succinylbenzoate + ATP + CoA = 2-succinylbenzoyl-CoA + AMP + diphosphate. Its pathway is quinol/quinone metabolism; 1,4-dihydroxy-2-naphthoate biosynthesis; 1,4-dihydroxy-2-naphthoate from chorismate: step 5/7. The protein operates within quinol/quinone metabolism; menaquinone biosynthesis. In terms of biological role, converts 2-succinylbenzoate (OSB) to 2-succinylbenzoyl-CoA (OSB-CoA). The polypeptide is 2-succinylbenzoate--CoA ligase (Bacillus cereus (strain ZK / E33L)).